A 417-amino-acid polypeptide reads, in one-letter code: NADH-quinone oxidoreductase subunit D (417 aa).

It belongs to the complex I 49 kDa subunit family. NDH-1 is composed of 14 different subunits. Subunits NuoB, C, D, E, F, and G constitute the peripheral sector of the complex.

The protein resides in the cell inner membrane. It carries out the reaction a quinone + NADH + 5 H(+)(in) = a quinol + NAD(+) + 4 H(+)(out). In terms of biological role, NDH-1 shuttles electrons from NADH, via FMN and iron-sulfur (Fe-S) centers, to quinones in the respiratory chain. The immediate electron acceptor for the enzyme in this species is believed to be ubiquinone. Couples the redox reaction to proton translocation (for every two electrons transferred, four hydrogen ions are translocated across the cytoplasmic membrane), and thus conserves the redox energy in a proton gradient. The chain is NADH-quinone oxidoreductase subunit D from Methylobacillus flagellatus (strain ATCC 51484 / DSM 6875 / VKM B-1610 / KT).